A 579-amino-acid chain; its full sequence is Membrane protein insertase YidC (579 aa).

Residues 10–30 traverse the membrane as a helical segment; sequence LVIVTILSALILFGWSFVTKH. Residues 35 to 61 form a disordered region; that stretch reads PPAPTQQGKNQPKAELTAEESGDKPLK. A run of 5 helical transmembrane segments spans residues 330–350, 351–371, 423–443, 478–498, and 523–543; these read FDKA…FYYL, DWLF…VFTI, VNPF…IALY, LLHF…ILGI, and PLIS…YYIF. Over residues 560 to 572 the composition is skewed to basic and acidic residues; the sequence is STPEERQDRAERK. Residues 560–579 are disordered; the sequence is STPEERQDRAERKRPSKKKA.

Belongs to the OXA1/ALB3/YidC family. Type 1 subfamily. Interacts with the Sec translocase complex via SecD. Specifically interacts with transmembrane segments of nascent integral membrane proteins during membrane integration.

It localises to the cell inner membrane. Its function is as follows. Required for the insertion and/or proper folding and/or complex formation of integral membrane proteins into the membrane. Involved in integration of membrane proteins that insert both dependently and independently of the Sec translocase complex, as well as at least some lipoproteins. Aids folding of multispanning membrane proteins. The chain is Membrane protein insertase YidC from Zymomonas mobilis subsp. mobilis (strain ATCC 31821 / ZM4 / CP4).